The following is a 215-amino-acid chain: Phosphoribosylglycinamide formyltransferase (215 aa).

Residues R74, 99-102 (MRIL), and N116 contribute to the (6R)-10-formyltetrahydrofolate site. H118 functions as the Proton donor in the catalytic mechanism.

The protein belongs to the GART family.

It catalyses the reaction N(1)-(5-phospho-beta-D-ribosyl)glycinamide + (6R)-10-formyltetrahydrofolate = N(2)-formyl-N(1)-(5-phospho-beta-D-ribosyl)glycinamide + (6S)-5,6,7,8-tetrahydrofolate + H(+). The protein operates within purine metabolism; IMP biosynthesis via de novo pathway; N(2)-formyl-N(1)-(5-phospho-D-ribosyl)glycinamide from N(1)-(5-phospho-D-ribosyl)glycinamide (10-formyl THF route): step 1/1. Functionally, catalyzes the transfer of a formyl group from 10-formyltetrahydrofolate to 5-phospho-ribosyl-glycinamide (GAR), producing 5-phospho-ribosyl-N-formylglycinamide (FGAR) and tetrahydrofolate. In Mycobacterium tuberculosis (strain CDC 1551 / Oshkosh), this protein is Phosphoribosylglycinamide formyltransferase.